A 90-amino-acid polypeptide reads, in one-letter code: Putative UPF0401 protein YpjI (90 aa).

This sequence belongs to the UPF0401 family.

The sequence is that of Putative UPF0401 protein YpjI (ypjI) from Escherichia coli (strain K12).